Consider the following 108-residue polypeptide: Envelope small membrane protein (108 aa).

Residues 1–10 (MNLLNKSLEE) are Virion surface-facing. A helical transmembrane segment spans residues 11-31 (NGSFLTALYIIVGFLALYLLG). Residues 32–108 (RALQAFVQAA…QDAQRDKLYS (77 aa)) lie on the Intravirion side of the membrane. Residues 88 to 108 (NGWNNKNPANFQDAQRDKLYS) are disordered. The span at 89–100 (GWNNKNPANFQD) shows a compositional bias: polar residues.

It belongs to the gammacoronaviruses E protein family. Homooligomer. Interacts with the M membrane protein in the budding compartment of the host cell, which is located between endoplasmic reticulum and the Golgi complex. The cytoplasmic tails of both proteins are important for this function. Interacts with Nucleoprotein.

It is found in the host Golgi apparatus membrane. Functionally, plays a central role in virus morphogenesis and assembly. Acts as a viroporin and self-assembles in host membranes forming pentameric protein-lipid pores that allow ion transport. Also plays a role in the induction of apoptosis. This is Envelope small membrane protein from Gallus gallus (Chicken).